Reading from the N-terminus, the 433-residue chain is Enolase (433 aa).

Glutamine 164 is a (2R)-2-phosphoglycerate binding site. Catalysis depends on glutamate 206, which acts as the Proton donor. Residues aspartate 243, glutamate 289, and aspartate 316 each coordinate Mg(2+). Residues lysine 341, arginine 370, serine 371, and lysine 392 each coordinate (2R)-2-phosphoglycerate. Lysine 341 functions as the Proton acceptor in the catalytic mechanism.

This sequence belongs to the enolase family. Mg(2+) is required as a cofactor.

Its subcellular location is the cytoplasm. It localises to the secreted. It is found in the cell surface. It catalyses the reaction (2R)-2-phosphoglycerate = phosphoenolpyruvate + H2O. Its pathway is carbohydrate degradation; glycolysis; pyruvate from D-glyceraldehyde 3-phosphate: step 4/5. Its function is as follows. Catalyzes the reversible conversion of 2-phosphoglycerate (2-PG) into phosphoenolpyruvate (PEP). It is essential for the degradation of carbohydrates via glycolysis. This chain is Enolase, found in Borreliella afzelii (strain PKo) (Borrelia afzelii).